We begin with the raw amino-acid sequence, 199 residues long: NAD(P)H dehydrogenase (quinone) (199 aa).

The Flavodoxin-like domain maps to 4–190 (VLVLYYSTYG…DGARFLGQHV (187 aa)). Residues 10-15 (STYGHI) and 78-80 (TRF) contribute to the FMN site. Residue Tyr-12 participates in NAD(+) binding. Trp-98 contributes to the substrate binding site. Residues 113-119 (STATQHG) and His-134 each bind FMN.

This sequence belongs to the WrbA family. FMN serves as cofactor.

The enzyme catalyses a quinone + NADH + H(+) = a quinol + NAD(+). It catalyses the reaction a quinone + NADPH + H(+) = a quinol + NADP(+). This is NAD(P)H dehydrogenase (quinone) from Gluconacetobacter diazotrophicus (strain ATCC 49037 / DSM 5601 / CCUG 37298 / CIP 103539 / LMG 7603 / PAl5).